A 953-amino-acid chain; its full sequence is TPR repeat-containing protein ZIP4 (953 aa).

The stretch at 129 to 162 is one TPR 1 repeat; that stretch reads ASFFHRSGLAWLDLGRVDLASACFEKATPLVSAA. The interval 248–269 is disordered; it reads AASPSSSSPRTPPYGGATPKTP. TPR repeat units follow at residues 432-465 and 473-506; these read HALL…VSRD and ADCF…EPNI. The segment at 924-953 is disordered; the sequence is RVSGDEPDECSQEEAPKASISGSMSQPVLV. Over residues 943–953 the composition is skewed to polar residues; that stretch reads ISGSMSQPVLV.

The protein localises to the nucleus. It is found in the chromosome. Functionally, required for crossover formation, complete synapsis of homologous chromosomes and bivalent formation during meiosis. Is specific to recombination events resulting in interference-sensitive crossovers (class I meiotic crossover) and works cooperatively with MER3 to promote crossovers. This Oryza sativa subsp. indica (Rice) protein is TPR repeat-containing protein ZIP4.